Reading from the N-terminus, the 331-residue chain is Ribosomal RNA small subunit methyltransferase H (331 aa).

Residues 38–40 (GGY), D56, F83, D100, and Q107 contribute to the S-adenosyl-L-methionine site. The interval 289-331 (AELAENPRARSARLRVGVRTDAPAGKVDPQALGTPLIPKKGRR) is disordered.

This sequence belongs to the methyltransferase superfamily. RsmH family.

It localises to the cytoplasm. The enzyme catalyses cytidine(1402) in 16S rRNA + S-adenosyl-L-methionine = N(4)-methylcytidine(1402) in 16S rRNA + S-adenosyl-L-homocysteine + H(+). Specifically methylates the N4 position of cytidine in position 1402 (C1402) of 16S rRNA. In Cereibacter sphaeroides (strain ATCC 17029 / ATH 2.4.9) (Rhodobacter sphaeroides), this protein is Ribosomal RNA small subunit methyltransferase H.